Here is a 61-residue protein sequence, read N- to C-terminus: MAKKALVNKAAKKPKFAVRAYTRCNRCGRPHAVFRKFGLCRICLREMAHAGELPGIHKSSW.

Zn(2+) is bound by residues C24, C27, C40, and C43.

This sequence belongs to the universal ribosomal protein uS14 family. Zinc-binding uS14 subfamily. As to quaternary structure, part of the 30S ribosomal subunit. Contacts proteins S3 and S10. Requires Zn(2+) as cofactor.

In terms of biological role, binds 16S rRNA, required for the assembly of 30S particles and may also be responsible for determining the conformation of the 16S rRNA at the A site. This chain is Small ribosomal subunit protein uS14B, found in Mycobacteroides abscessus (strain ATCC 19977 / DSM 44196 / CCUG 20993 / CIP 104536 / JCM 13569 / NCTC 13031 / TMC 1543 / L948) (Mycobacterium abscessus).